A 1011-amino-acid chain; its full sequence is Rap guanine nucleotide exchange factor 4 (1011 aa).

The 76-residue stretch at 216-291 folds into the DEP domain; sequence SRAPHMIRDR…DKYLFYRFLD (76 aa). 3',5'-cyclic AMP-binding positions include 422-425 and 432-433; these read GKLA and RA. The N-terminal Ras-GEF domain occupies 496–634; it reads QKYTVMSGTP…ELEKIVKQIS (139 aa). One can recognise a Ras-GEF domain in the interval 772–1009; the sequence is SSKDLAYQMT…SQMSHRLEPR (238 aa).

In terms of assembly, interacts with RAP1B, RIMS1 and RIMS2. Probably part of a complex with RIMS2 and GTP-activated RAB3A. Expressed in cerebellum, pituitary, adrenal gland and liver.

It localises to the cytoplasm. Its subcellular location is the membrane. Its function is as follows. Guanine nucleotide exchange factor (GEF) for RAP1A, RAP1B and RAP2A small GTPases that is activated by binding cAMP. Seems not to activate RAB3A. Involved in cAMP-dependent, PKA-independent exocytosis through interaction with RIMS2. The sequence is that of Rap guanine nucleotide exchange factor 4 (Rapgef4) from Mus musculus (Mouse).